A 206-amino-acid chain; its full sequence is Na(+)-translocating NADH-quinone reductase subunit E (206 aa).

A run of 6 helical transmembrane segments spans residues 12–32, 36–56, 85–105, 118–138, 148–168, and 184–204; these read AVFVENMALAFFLGMCTFLAV, ISSAIGLGIAVVVVLTITVPV, FLGLLSYIGVIAALVQILEMF, GVFLPLITVNCAILGASLFMV, VIYGAGAGVGWALAITALAGI, and LGITFITVGLMSLGFMSFSGI.

Belongs to the NqrDE/RnfAE family. As to quaternary structure, composed of six subunits; NqrA, NqrB, NqrC, NqrD, NqrE and NqrF.

Its subcellular location is the cell inner membrane. It carries out the reaction a ubiquinone + n Na(+)(in) + NADH + H(+) = a ubiquinol + n Na(+)(out) + NAD(+). NQR complex catalyzes the reduction of ubiquinone-1 to ubiquinol by two successive reactions, coupled with the transport of Na(+) ions from the cytoplasm to the periplasm. NqrA to NqrE are probably involved in the second step, the conversion of ubisemiquinone to ubiquinol. This is Na(+)-translocating NADH-quinone reductase subunit E from Chromohalobacter salexigens (strain ATCC BAA-138 / DSM 3043 / CIP 106854 / NCIMB 13768 / 1H11).